The following is a 210-amino-acid chain: V-type ATP synthase subunit D (210 aa).

Belongs to the V-ATPase D subunit family.

In terms of biological role, produces ATP from ADP in the presence of a proton gradient across the membrane. The sequence is that of V-type ATP synthase subunit D from Coprothermobacter proteolyticus (strain ATCC 35245 / DSM 5265 / OCM 4 / BT).